The chain runs to 265 residues: uncharacterized protein (265 aa).

Disordered stretches follow at residues 62–94 (RNKKKEEKKGKGLMTARGGNRRDTETSQQALGK) and 118–149 (MVPGSYIKDGPKKSDTDIKDAVDPESTQRPNP). Positions 126-139 (DGPKKSDTDIKDAV) are enriched in basic and acidic residues.

This is an uncharacterized protein from Homo sapiens (Human).